The sequence spans 232 residues: Putative membrane protein ORF8 (232 aa).

Residues 71–84 are compositionally biased toward low complexity; the sequence is GSSAASIPSAPTPD. A disordered region spans residues 71–121; sequence GSSAASIPSAPTPDATRESPTGEPHRDRALSTETPTPEPSRDGGSTPEVLH. Helical transmembrane passes span 166–182 and 195–211; these read VFARALAAAEIAIGSVA and LVVTSLVFAGVALWVIV.

It localises to the membrane. This is Putative membrane protein ORF8 (ORF8) from Ictalurid herpesvirus 1 (strain Auburn) (IcHV-1).